Consider the following 586-residue polypeptide: Merlin (586 aa).

Ser9 bears the Phosphoserine mark. Residues Phe18–Arg307 enclose the FERM domain. Positions Lys325–Arg354 are disordered. At Ser514 the chain carries Phosphoserine; by PAK. The tract at residues Leu557–Ile586 is disordered.

In terms of assembly, interacts with NHERF1, HGS and AGAP2. Interacts with SGSM3. Interacts (via FERM domain) with MPP1. Interacts with LAYN and WWC1. Interacts with the CUL4A-RBX1-DDB1-VprBP/DCAF1 E3 ubiquitin-protein ligase complex. The unphosphorylated form interacts (via FERM domain) with VPRBP/DCAF1. Interacts (via FERM domain) with NOP53; the interaction is direct. Interacts with SCHIP1; the interaction is direct. In terms of processing, ubiquitinated by the CUL4A-RBX1-DDB1-DCAF1/VprBP E3 ubiquitin-protein ligase complex for ubiquitination and subsequent proteasome-dependent degradation. Phosphorylation of Ser-514 inhibits nuclear localization by disrupting the intramolecular association of the FERM domain with the C-terminal tail. The dephosphorylation of Ser-514 favors the interaction with NOP53.

Its subcellular location is the cell membrane. The protein resides in the cell projection. It localises to the cytoplasm. It is found in the cytoskeleton. The protein localises to the nucleus. Probable regulator of the Hippo/SWH (Sav/Wts/Hpo) signaling pathway, a signaling pathway that plays a pivotal role in tumor suppression by restricting proliferation and promoting apoptosis. Along with WWC1 can synergistically induce the phosphorylation of LATS1 and LATS2 and can probably function in the regulation of the Hippo/SWH (Sav/Wts/Hpo) signaling pathway. May act as a membrane stabilizing protein. May inhibit PI3 kinase by binding to AGAP2 and impairing its stimulating activity. Suppresses cell proliferation and tumorigenesis by inhibiting the CUL4A-RBX1-DDB1-VprBP/DCAF1 E3 ubiquitin-protein ligase complex Plays a role in lens development and is required for complete fiber cell terminal differentiation, maintenance of cell polarity and separation of the lens vesicle from the corneal epithelium. This is Merlin (Nf2) from Rattus norvegicus (Rat).